Here is a 279-residue protein sequence, read N- to C-terminus: MVELTITGDDDDILSMFFDEEFVPHAFVDILLSNALNEDQIQTQSVSSLLLTRLDFYTKNLTKELESTIWNLDKLSQTLPRTWASSRYHKEAEQNDSSLYSTESLKSSKLEYYLDTLASAVRALETGMHNVTEKLSDLDNENNRNTNVRQQLQSLMLIKERIEKVVYYLEQVRTVTNISTVRENNTTSTGTDLSITDFRTSLKALEDTIDESLSSAIDNEAKDETNKDLIGRIDSLSELKCLFKGLDKFFAEYSNFSESIKSKAQSYLSTKNIDDGMIS.

As to quaternary structure, component of the conserved oligomeric Golgi (COG or Sec34/Sec35) complex which consists of eight different proteins COG1-COG8.

The protein localises to the golgi apparatus membrane. Functionally, acts as a component of the peripheral membrane COG complex that is involved in intra-Golgi protein trafficking. COG is located at the cis-Golgi, and regulates tethering of retrograde intra-Golgi vesicles and possibly a number of other membrane trafficking events. The sequence is that of Conserved oligomeric Golgi complex subunit 7 (COG7) from Saccharomyces cerevisiae (strain ATCC 204508 / S288c) (Baker's yeast).